A 93-amino-acid polypeptide reads, in one-letter code: Putative aspartate aminotransferase (93 aa).

It belongs to the class-I pyridoxal-phosphate-dependent aminotransferase family. In terms of assembly, homodimer. The cofactor is pyridoxal 5'-phosphate.

It is found in the cytoplasm. It carries out the reaction L-aspartate + 2-oxoglutarate = oxaloacetate + L-glutamate. The protein is Putative aspartate aminotransferase of Methylorubrum extorquens (Methylobacterium dichloromethanicum).